Consider the following 70-residue polypeptide: Alpha-elapitoxin-Ast2a (70 aa).

Disulfide bonds link C3/C20, C13/C41, C26/C30, C45/C56, and C57/C62. S70 carries the post-translational modification Serine amide.

The protein belongs to the three-finger toxin family. Long-chain subfamily. Type II alpha-neurotoxin sub-subfamily. As to expression, expressed by the venom gland.

The protein localises to the secreted. In terms of biological role, binds with high affinity to muscular (alpha-1/CHRNA1) and neuronal (alpha-7/CHRNA7) nicotinic acetylcholine receptor (nAChR) and inhibits acetylcholine from binding to the receptor, thereby impairing neuromuscular and neuronal transmission. The polypeptide is Alpha-elapitoxin-Ast2a (Hydrophis stokesii (Stokes's sea snake)).